A 402-amino-acid chain; its full sequence is O-glucosyltransferase rumi homolog (402 aa).

A signal peptide spans 1-20 (MPYLEIVLALLVLSFQLGHS). Disulfide bonds link C67/C74, C72/C375, C118/C124, and C279/C302. N71 carries an N-linked (GlcNAc...) asparagine glycan. D149 serves as the catalytic Proton donor/acceptor. The interval 189 to 194 (AISLYP) is interaction with the consensus sequence C-X-S-X-[PA]-C in peptide substrates. Residues 226-230 (RGSRT), R234, 273-275 (VRL), and 291-295 (AASFR) each bind UDP-alpha-D-glucose.

Belongs to the glycosyltransferase 90 family.

Its subcellular location is the endoplasmic reticulum lumen. It localises to the secreted. The protein operates within protein modification; protein glycosylation. Protein O-glucosyltransferase. Catalyzes the reaction that attaches glucose through an O-glycosidic linkage to a conserved serine residue found in the consensus sequence C-X-S-X-[PA]-C in epidermal growth factor-like repeats. Regulates Notch signaling by glucosylating Notch in the ER, glucosylation is required for the correct folding and cleavage of Notch. The protein is O-glucosyltransferase rumi homolog of Aedes aegypti (Yellowfever mosquito).